A 365-amino-acid polypeptide reads, in one-letter code: UDP-N-acetylglucosamine--N-acetylmuramyl-(pentapeptide) pyrophosphoryl-undecaprenol N-acetylglucosamine transferase (365 aa).

UDP-N-acetyl-alpha-D-glucosamine contacts are provided by residues 10-12 (TGG), asparagine 124, arginine 165, serine 193, isoleucine 248, and glutamine 293.

It belongs to the glycosyltransferase 28 family. MurG subfamily.

It is found in the cell inner membrane. The catalysed reaction is di-trans,octa-cis-undecaprenyl diphospho-N-acetyl-alpha-D-muramoyl-L-alanyl-D-glutamyl-meso-2,6-diaminopimeloyl-D-alanyl-D-alanine + UDP-N-acetyl-alpha-D-glucosamine = di-trans,octa-cis-undecaprenyl diphospho-[N-acetyl-alpha-D-glucosaminyl-(1-&gt;4)]-N-acetyl-alpha-D-muramoyl-L-alanyl-D-glutamyl-meso-2,6-diaminopimeloyl-D-alanyl-D-alanine + UDP + H(+). It participates in cell wall biogenesis; peptidoglycan biosynthesis. Functionally, cell wall formation. Catalyzes the transfer of a GlcNAc subunit on undecaprenyl-pyrophosphoryl-MurNAc-pentapeptide (lipid intermediate I) to form undecaprenyl-pyrophosphoryl-MurNAc-(pentapeptide)GlcNAc (lipid intermediate II). The protein is UDP-N-acetylglucosamine--N-acetylmuramyl-(pentapeptide) pyrophosphoryl-undecaprenol N-acetylglucosamine transferase of Geotalea uraniireducens (strain Rf4) (Geobacter uraniireducens).